We begin with the raw amino-acid sequence, 440 residues long: Thymidine phosphorylase (440 aa).

It belongs to the thymidine/pyrimidine-nucleoside phosphorylase family. Homodimer.

The catalysed reaction is thymidine + phosphate = 2-deoxy-alpha-D-ribose 1-phosphate + thymine. The protein operates within pyrimidine metabolism; dTMP biosynthesis via salvage pathway; dTMP from thymine: step 1/2. Its function is as follows. The enzymes which catalyze the reversible phosphorolysis of pyrimidine nucleosides are involved in the degradation of these compounds and in their utilization as carbon and energy sources, or in the rescue of pyrimidine bases for nucleotide synthesis. In Shigella flexneri serotype 5b (strain 8401), this protein is Thymidine phosphorylase.